Consider the following 214-residue polypeptide: ATP phosphoribosyltransferase (214 aa).

It belongs to the ATP phosphoribosyltransferase family. Short subfamily. As to quaternary structure, heteromultimer composed of HisG and HisZ subunits.

It is found in the cytoplasm. The catalysed reaction is 1-(5-phospho-beta-D-ribosyl)-ATP + diphosphate = 5-phospho-alpha-D-ribose 1-diphosphate + ATP. The protein operates within amino-acid biosynthesis; L-histidine biosynthesis; L-histidine from 5-phospho-alpha-D-ribose 1-diphosphate: step 1/9. In terms of biological role, catalyzes the condensation of ATP and 5-phosphoribose 1-diphosphate to form N'-(5'-phosphoribosyl)-ATP (PR-ATP). Has a crucial role in the pathway because the rate of histidine biosynthesis seems to be controlled primarily by regulation of HisG enzymatic activity. The polypeptide is ATP phosphoribosyltransferase (Methylobacillus flagellatus (strain ATCC 51484 / DSM 6875 / VKM B-1610 / KT)).